The primary structure comprises 1554 residues: Lysine-specific demethylase 5C (1554 aa).

The region spanning 14–55 (CPVFEPSWAEFRDPLGYIAKIRPIAEKSGICKIRPPADWQPP) is the JmjN domain. Residues 79–169 (TRVKLNYLDQ…IVYPYEMYQS (91 aa)) form the ARID domain. The span at 197 to 207 (LRQSVQPSKFN) shows a compositional bias: polar residues. Residues 197–227 (LRQSVQPSKFNSYGRRAKRLQPDPEPTEEDI) are disordered. Residues K205, K229, K244, and K274 each participate in a glycyl lysine isopeptide (Lys-Gly) (interchain with G-Cter in SUMO2) cross-link. Residues 284–303 (ESTSPKTFLEGKEELSHSPE) form a disordered region. S287 carries the phosphoserine modification. K295 participates in a covalent cross-link: Glycyl lysine isopeptide (Lys-Gly) (interchain with G-Cter in SUMO2). A phosphoserine mark is found at S301 and S317. The PHD-type 1 zinc-finger motif lies at 326 to 372 (VCRMCSRGDEDDKLLLCDGCDDNYHIFCLLPPLPEIPKGVWRCPKCV). In terms of domain architecture, JmjC spans 468-634 (EYATSGWNLN…AGRQCIEHYR (167 aa)). Fe cation is bound by residues H514, D517, and H602. S893 and S897 each carry phosphoserine. A Glycyl lysine isopeptide (Lys-Gly) (interchain with G-Cter in SUMO2) cross-link involves residue K1127. The PHD-type 2 zinc finger occupies 1187–1248 (ICVCGQVPAG…DTKFLCPLCM (62 aa)). Disordered regions lie at residues 1319–1364 (SKPE…EGSG) and 1437–1535 (AERH…APFS). S1353 is subject to Phosphoserine. Basic residues predominate over residues 1442-1457 (SRTRGRALERRRRRKV). A compositionally biased stretch (basic and acidic residues) spans 1458–1475 (DRGGEPDDPAREELEPKR). Residues 1482–1497 (EAEEVQEEEELEEETG) show a composition bias toward acidic residues.

The protein belongs to the JARID1 histone demethylase family. In terms of assembly, part of two distinct complexes, one containing E2F6, and the other containing REST. Interacts with ZMYND8. Requires Fe(2+) as cofactor.

The protein localises to the nucleus. It catalyses the reaction N(6),N(6),N(6)-trimethyl-L-lysyl(4)-[histone H3] + 3 2-oxoglutarate + 3 O2 = L-lysyl(4)-[histone H3] + 3 formaldehyde + 3 succinate + 3 CO2. Functionally, histone demethylase that specifically demethylates 'Lys-4' of histone H3, thereby playing a central role in histone code. Does not demethylate histone H3 'Lys-9', H3 'Lys-27', H3 'Lys-36', H3 'Lys-79' or H4 'Lys-20'. Demethylates trimethylated and dimethylated but not monomethylated H3 'Lys-4'. Participates in transcriptional repression of neuronal genes by recruiting histone deacetylases and REST at neuron-restrictive silencer elements. Represses the CLOCK-BMAL1 heterodimer-mediated transcriptional activation of the core clock component PER2. The chain is Lysine-specific demethylase 5C (Kdm5c) from Mus musculus (Mouse).